A 64-amino-acid chain; its full sequence is Antimicrobial peptide THP2 (64 aa).

Positions 1 to 28 are cleaved as a signal peptide; sequence MRILYLLFSLLFLALQVSPGLSSPKRDM. 3 disulfides stabilise this stretch: Cys-31/Cys-57, Cys-36/Cys-51, and Cys-41/Cys-58.

Expressed in circulating heterophil granulocytes and bone marrow (at protein level).

Its subcellular location is the secreted. Functionally, antibacterial activity against the Gram-positive bacterium Staphylococcus aureus. Lacks antibacterial activity against the Gram-negative bacterium E.coli K-12. This is Antimicrobial peptide THP2 from Meleagris gallopavo (Wild turkey).